The primary structure comprises 148 residues: UPF0260 protein ECA2365 (148 aa).

The protein belongs to the UPF0260 family.

This is UPF0260 protein ECA2365 from Pectobacterium atrosepticum (strain SCRI 1043 / ATCC BAA-672) (Erwinia carotovora subsp. atroseptica).